The sequence spans 445 residues: UPF0210 protein SSA_2018 (445 aa).

The protein belongs to the UPF0210 family. In terms of assembly, homodimer.

The sequence is that of UPF0210 protein SSA_2018 from Streptococcus sanguinis (strain SK36).